A 461-amino-acid chain; its full sequence is UDP-glucose 6-dehydrogenase TuaD (461 aa).

NAD(+) is bound by residues 3–20 (KIAV…GTCF), valine 12, aspartate 31, lysine 36, threonine 122, and glutamate 156. Substrate-binding positions include 152 to 156 (EFLRE), lysine 205, asparagine 209, 250 to 254 (FLKAG), and glycine 258. The active-site Nucleophile is the cysteine 261. Lysine 264 is a binding site for NAD(+). Lysine 321 is a substrate binding site. An NAD(+)-binding site is contributed by arginine 328.

Belongs to the UDP-glucose/GDP-mannose dehydrogenase family. In terms of processing, phosphorylated by YwqD and dephosphorylated by YwqE in vitro.

Its subcellular location is the cytoplasm. The enzyme catalyses UDP-alpha-D-glucose + 2 NAD(+) + H2O = UDP-alpha-D-glucuronate + 2 NADH + 3 H(+). It functions in the pathway nucleotide-sugar biosynthesis; UDP-alpha-D-glucuronate biosynthesis; UDP-alpha-D-glucuronate from UDP-alpha-D-glucose: step 1/1. With respect to regulation, activated by phosphorylation; inhibited by dephosphorylation. In terms of biological role, catalyzes the conversion of UDP-glucose into UDP-glucuronate, one of the precursors of teichuronic acid. The protein is UDP-glucose 6-dehydrogenase TuaD (tuaD) of Bacillus subtilis (strain 168).